The primary structure comprises 123 residues: UPF0102 protein APP7_1414 (123 aa).

This sequence belongs to the UPF0102 family.

The chain is UPF0102 protein APP7_1414 from Actinobacillus pleuropneumoniae serotype 7 (strain AP76).